A 427-amino-acid chain; its full sequence is 3-phosphoshikimate 1-carboxyvinyltransferase (427 aa).

3 residues coordinate 3-phosphoshikimate: Lys20, Ser21, and Arg25. A phosphoenolpyruvate-binding site is contributed by Lys20. Phosphoenolpyruvate is bound by residues Gly92 and Arg120. Positions 166, 168, 312, and 339 each coordinate 3-phosphoshikimate. Gln168 is a binding site for phosphoenolpyruvate. Asp312 acts as the Proton acceptor in catalysis. Phosphoenolpyruvate contacts are provided by Arg343 and Arg385.

The protein belongs to the EPSP synthase family. In terms of assembly, monomer.

Its subcellular location is the cytoplasm. The catalysed reaction is 3-phosphoshikimate + phosphoenolpyruvate = 5-O-(1-carboxyvinyl)-3-phosphoshikimate + phosphate. It participates in metabolic intermediate biosynthesis; chorismate biosynthesis; chorismate from D-erythrose 4-phosphate and phosphoenolpyruvate: step 6/7. Its function is as follows. Catalyzes the transfer of the enolpyruvyl moiety of phosphoenolpyruvate (PEP) to the 5-hydroxyl of shikimate-3-phosphate (S3P) to produce enolpyruvyl shikimate-3-phosphate and inorganic phosphate. The protein is 3-phosphoshikimate 1-carboxyvinyltransferase of Streptococcus uberis (strain ATCC BAA-854 / 0140J).